The following is a 312-amino-acid chain: MNRTRSDSLAAGGLNWDSLPLRLFAGGNAKFWDPADIDFSRDRADWESLSTMERDWATRLCAEFIAGEEAVTQDIQPFMAAMRAEGRLGDEMYLTQFAFEEAKHTQVFRMWLDAVGITEDLQGYLDDLPAYRQMFYEELPASLDALATDPSPQAQVRASVTYNHVIEGMMALTGYYAWHRICVDRHILPGMQELVRRIGDDERRHMAWGTFTCRRHVAADDANWTVFEDRMNELIPLALQNTDDAFALYDEIPFGLTIEEFQQYAADKGMRRFGTISSARGRPLAEIDVDYTPLHLEDSFADEDRKALAASA.

Residues glutamate 68, glutamate 101, and histidine 104 each contribute to the Mn(2+) site. A cross-link (3-(O4'-tyrosyl)-valine (Val-Tyr)) is located at residues 71-162 (VTQDIQPFMA…QAQVRASVTY (92 aa)). A Fe cation-binding site is contributed by glutamate 101. Fe cation is bound by residues glutamate 167, glutamate 202, and histidine 205.

This sequence belongs to the ribonucleoside diphosphate reductase small chain family. R2-like ligand binding oxidase subfamily. As to quaternary structure, homodimer. It depends on Fe cation as a cofactor. The cofactor is Mn(2+).

Probable oxidase that might be involved in lipid metabolism. This Mycolicibacterium gilvum (strain PYR-GCK) (Mycobacterium gilvum (strain PYR-GCK)) protein is R2-like ligand binding oxidase.